The chain runs to 148 residues: Ubiquitin-conjugating enzyme E2 29 (148 aa).

Positions 1 to 147 (MATRRILKEL…ARSWTQKYAL (147 aa)) constitute a UBC core domain. Residue Cys85 is the Glycyl thioester intermediate of the active site.

This sequence belongs to the ubiquitin-conjugating enzyme family.

It catalyses the reaction S-ubiquitinyl-[E1 ubiquitin-activating enzyme]-L-cysteine + [E2 ubiquitin-conjugating enzyme]-L-cysteine = [E1 ubiquitin-activating enzyme]-L-cysteine + S-ubiquitinyl-[E2 ubiquitin-conjugating enzyme]-L-cysteine.. Its pathway is protein modification; protein ubiquitination. Its function is as follows. Accepts the ubiquitin from the E1 complex and catalyzes its covalent attachment to other proteins. This is Ubiquitin-conjugating enzyme E2 29 (UBC29) from Arabidopsis thaliana (Mouse-ear cress).